The chain runs to 297 residues: Phosphoribosylaminoimidazole-succinocarboxamide synthase (297 aa).

Belongs to the SAICAR synthetase family.

The enzyme catalyses 5-amino-1-(5-phospho-D-ribosyl)imidazole-4-carboxylate + L-aspartate + ATP = (2S)-2-[5-amino-1-(5-phospho-beta-D-ribosyl)imidazole-4-carboxamido]succinate + ADP + phosphate + 2 H(+). It functions in the pathway purine metabolism; IMP biosynthesis via de novo pathway; 5-amino-1-(5-phospho-D-ribosyl)imidazole-4-carboxamide from 5-amino-1-(5-phospho-D-ribosyl)imidazole-4-carboxylate: step 1/2. This is Phosphoribosylaminoimidazole-succinocarboxamide synthase from Mycobacterium tuberculosis (strain ATCC 25177 / H37Ra).